A 376-amino-acid polypeptide reads, in one-letter code: Zinc transporter 7 (376 aa).

At 1 to 37 the chain is on the cytoplasmic side; the sequence is MLPLSIKDDEYKPPKFNLFRKISGWFRSILSDKTSRN. The chain crosses the membrane as a helical span at residues 38-58; sequence LFFFLCLNLSFAFVELLYGIW. The Lumenal portion of the chain corresponds to 59–67; that stretch reads SNCLGLISD. The helical transmembrane segment at 68 to 88 threads the bilayer; it reads SFHMFFDSTAILAGLAASVIS. Residues 89–102 are Cytoplasmic-facing; the sequence is KWRDNDAFSYGYVR. Residues 103–123 form a helical membrane-spanning segment; that stretch reads AEVLAGFVNGLFLIFTAFFIF. The Lumenal portion of the chain corresponds to 124 to 140; it reads SEGVERALAPPDVHHER. A helical membrane pass occupies residues 141-161; sequence LLLVSILGFVVNLVGIFVFKH. Residues 161–218 form a his-rich loop region; sequence HGGHGHSHGSGHGHSHSLFNGALDQTHGHGDHCHSHELKHGAAHSHDHAHGHGHFHSH. Over 162–236 the chain is Cytoplasmic; that stretch reads GGHGHSHGSG…TGPSRQILQG (75 aa). Basic and acidic residues predominate over residues 188-222; it reads GHGDHCHSHELKHGAAHSHDHAHGHGHFHSHDGPS. Residues 188–226 are disordered; the sequence is GHGDHCHSHELKHGAAHSHDHAHGHGHFHSHDGPSLKET. The helical transmembrane segment at 237–257 threads the bilayer; that stretch reads VFLHILADTLGSIGVIASAIM. The Lumenal segment spans residues 258–262; sequence MQNFG. Residues 263–283 form a helical membrane-spanning segment; sequence LMIADPICSILIAMLIVISVI. At 284–376 the chain is on the cytoplasmic side; that stretch reads PLLRESVGIL…LYVQIDFAAM (93 aa).

It belongs to the cation diffusion facilitator (CDF) transporter (TC 2.A.4) family. SLC30A subfamily. Homooligomer.

The protein resides in the golgi apparatus membrane. It is found in the cytoplasmic vesicle. Its subcellular location is the golgi apparatus. The protein localises to the trans-Golgi network. It localises to the sarcoplasmic reticulum. The protein resides in the mitochondrion. The catalysed reaction is Zn(2+)(in) = Zn(2+)(out). Functionally, zinc ion transporter mediating zinc entry from the cytosol into the lumen of organelles along the secretory pathway. By contributing to zinc ion homeostasis within the early secretory pathway, regulates the activation and folding of enzymes like alkaline phosphatases. The chain is Zinc transporter 7 (SLC30A7) from Bos taurus (Bovine).